We begin with the raw amino-acid sequence, 310 residues long: Probable deoxyhypusine synthase (310 aa).

The active-site Nucleophile is Lys-280.

It belongs to the deoxyhypusine synthase family. It depends on NAD(+) as a cofactor.

The catalysed reaction is [eIF5A protein]-L-lysine + spermidine = [eIF5A protein]-deoxyhypusine + propane-1,3-diamine. It functions in the pathway protein modification; eIF5A hypusination. Functionally, catalyzes the NAD-dependent oxidative cleavage of spermidine and the subsequent transfer of the butylamine moiety of spermidine to the epsilon-amino group of a specific lysine residue of the eIF-5A precursor protein to form the intermediate deoxyhypusine residue. The polypeptide is Probable deoxyhypusine synthase (dys) (Aeropyrum pernix (strain ATCC 700893 / DSM 11879 / JCM 9820 / NBRC 100138 / K1)).